A 258-amino-acid chain; its full sequence is Acyl-[acyl-carrier-protein]--UDP-N-acetylglucosamine O-acyltransferase (258 aa).

This sequence belongs to the transferase hexapeptide repeat family. LpxA subfamily. Homotrimer.

The protein localises to the cytoplasm. The enzyme catalyses a (3R)-hydroxyacyl-[ACP] + UDP-N-acetyl-alpha-D-glucosamine = a UDP-3-O-[(3R)-3-hydroxyacyl]-N-acetyl-alpha-D-glucosamine + holo-[ACP]. Its pathway is glycolipid biosynthesis; lipid IV(A) biosynthesis; lipid IV(A) from (3R)-3-hydroxytetradecanoyl-[acyl-carrier-protein] and UDP-N-acetyl-alpha-D-glucosamine: step 1/6. Functionally, involved in the biosynthesis of lipid A, a phosphorylated glycolipid that anchors the lipopolysaccharide to the outer membrane of the cell. The chain is Acyl-[acyl-carrier-protein]--UDP-N-acetylglucosamine O-acyltransferase from Thermodesulfovibrio yellowstonii (strain ATCC 51303 / DSM 11347 / YP87).